The following is a 678-amino-acid chain: Probable N-methylproline demethylase (678 aa).

FMN contacts are provided by residues Gly-59, Gln-102, Arg-220, Lys-299, and 321–322; that span reads TR. Cys-345, Cys-351, and Cys-363 together coordinate [4Fe-4S] cluster. FAD-binding residues include Ala-396, Glu-415, Gln-423, Arg-433, and Ala-460.

This sequence in the N-terminal section; belongs to the NADH:flavin oxidoreductase/NADH oxidase family. FMN is required as a cofactor. It depends on FAD as a cofactor. Requires [4Fe-4S] cluster as cofactor.

The enzyme catalyses N-methyl-L-proline + NAD(+) + H2O = L-proline + formaldehyde + NADH + H(+). It functions in the pathway amine and polyamine degradation; stachydrine degradation. Possible NADH-dependent oxidase, may function as a demethylase that converts N-methylproline to proline. This chain is Probable N-methylproline demethylase, found in Rhizobium meliloti (strain 1021) (Ensifer meliloti).